Consider the following 448-residue polypeptide: Probable glucuronoxylan glucuronosyltransferase IRX7 (448 aa).

Residues 1 to 16 are Cytoplasmic-facing; that stretch reads MTTHKHRRTEKNLCFK. The helical; Signal-anchor for type II membrane protein transmembrane segment at 17–37 threads the bilayer; that stretch reads QYYKWILCFILTLYFFASFFV. Topologically, residues 38-448 are lumenal; the sequence is DHDQDHRSST…RSVRRSNSFL (411 aa). N-linked (GlcNAc...) asparagine glycans are attached at residues Asn157, Asn189, Asn287, Asn397, and Asn438.

This sequence belongs to the glycosyltransferase 47 family. Expressed in developing interfascicular fibers and xylem cells in stems and developing secondary xylem in roots.

The protein resides in the golgi apparatus membrane. Its function is as follows. Involved in the synthesis of the hemicellulose glucuronoxylan, a major component of secondary cell walls. Probably involved in the synthesis of the glycosyl sequence at the glucuronoxylan reducing end. This Arabidopsis thaliana (Mouse-ear cress) protein is Probable glucuronoxylan glucuronosyltransferase IRX7 (IRX7).